Consider the following 428-residue polypeptide: Enolase (428 aa).

Gln164 provides a ligand contact to (2R)-2-phosphoglycerate. Glu208 serves as the catalytic Proton donor. Residues Asp245, Glu286, and Asp313 each coordinate Mg(2+). (2R)-2-phosphoglycerate is bound by residues Lys338, Arg367, Ser368, and Lys389. The Proton acceptor role is filled by Lys338.

It belongs to the enolase family. Mg(2+) serves as cofactor.

It is found in the cytoplasm. Its subcellular location is the secreted. The protein localises to the cell surface. The catalysed reaction is (2R)-2-phosphoglycerate = phosphoenolpyruvate + H2O. Its pathway is carbohydrate degradation; glycolysis; pyruvate from D-glyceraldehyde 3-phosphate: step 4/5. In terms of biological role, catalyzes the reversible conversion of 2-phosphoglycerate (2-PG) into phosphoenolpyruvate (PEP). It is essential for the degradation of carbohydrates via glycolysis. The sequence is that of Enolase from Pyrococcus abyssi (strain GE5 / Orsay).